The sequence spans 146 residues: Ribonuclease H (146 aa).

An RNase H type-1 domain is found at M1–E141. Mg(2+) contacts are provided by D9, E47, D69, and D133.

This sequence belongs to the RNase H family. As to quaternary structure, monomer. It depends on Mg(2+) as a cofactor.

The protein resides in the cytoplasm. The catalysed reaction is Endonucleolytic cleavage to 5'-phosphomonoester.. Functionally, endonuclease that specifically degrades the RNA of RNA-DNA hybrids. In Herminiimonas arsenicoxydans, this protein is Ribonuclease H.